A 143-amino-acid chain; its full sequence is Large ribosomal subunit protein uL11 (143 aa).

This sequence belongs to the universal ribosomal protein uL11 family. In terms of assembly, part of the ribosomal stalk of the 50S ribosomal subunit. Interacts with L10 and the large rRNA to form the base of the stalk. L10 forms an elongated spine to which L12 dimers bind in a sequential fashion forming a multimeric L10(L12)X complex. In terms of processing, one or more lysine residues are methylated.

In terms of biological role, forms part of the ribosomal stalk which helps the ribosome interact with GTP-bound translation factors. The sequence is that of Large ribosomal subunit protein uL11 from Leptothrix cholodnii (strain ATCC 51168 / LMG 8142 / SP-6) (Leptothrix discophora (strain SP-6)).